The primary structure comprises 526 residues: Sterol 14-alpha demethylase CYP51A (526 aa).

A helical membrane pass occupies residues I27–F47. Lanosterol is bound at residue Y123. Position 470 (C470) interacts with heme.

It belongs to the cytochrome P450 family. Requires heme as cofactor.

The protein resides in the endoplasmic reticulum membrane. It carries out the reaction a 14alpha-methyl steroid + 3 reduced [NADPH--hemoprotein reductase] + 3 O2 = a Delta(14) steroid + formate + 3 oxidized [NADPH--hemoprotein reductase] + 4 H2O + 4 H(+). The enzyme catalyses a 14alpha-methyl steroid + reduced [NADPH--hemoprotein reductase] + O2 = a 14alpha-hydroxymethyl steroid + oxidized [NADPH--hemoprotein reductase] + H2O + H(+). The catalysed reaction is a 14alpha-hydroxymethyl steroid + reduced [NADPH--hemoprotein reductase] + O2 = a 14alpha-formyl steroid + oxidized [NADPH--hemoprotein reductase] + 2 H2O + H(+). It catalyses the reaction a 14alpha-formyl steroid + reduced [NADPH--hemoprotein reductase] + O2 = a Delta(14) steroid + formate + oxidized [NADPH--hemoprotein reductase] + H2O + 2 H(+). It carries out the reaction lanosterol + 3 reduced [NADPH--hemoprotein reductase] + 3 O2 = 4,4-dimethyl-5alpha-cholesta-8,14,24-trien-3beta-ol + formate + 3 oxidized [NADPH--hemoprotein reductase] + 4 H2O + 4 H(+). The enzyme catalyses lanosterol + reduced [NADPH--hemoprotein reductase] + O2 = 32-hydroxylanosterol + oxidized [NADPH--hemoprotein reductase] + H2O + H(+). The catalysed reaction is 32-hydroxylanosterol + reduced [NADPH--hemoprotein reductase] + O2 = 32-oxolanosterol + oxidized [NADPH--hemoprotein reductase] + 2 H2O + H(+). It catalyses the reaction 32-oxolanosterol + reduced [NADPH--hemoprotein reductase] + O2 = 4,4-dimethyl-5alpha-cholesta-8,14,24-trien-3beta-ol + formate + oxidized [NADPH--hemoprotein reductase] + H2O + 2 H(+). It carries out the reaction eburicol + 3 reduced [NADPH--hemoprotein reductase] + 3 O2 = 14-demethyleburicol + formate + 3 oxidized [NADPH--hemoprotein reductase] + 4 H2O + 4 H(+). The enzyme catalyses eburicol + reduced [NADPH--hemoprotein reductase] + O2 = 32-hydroxyeburicol + oxidized [NADPH--hemoprotein reductase] + H2O + H(+). The catalysed reaction is 32-hydroxyeburicol + reduced [NADPH--hemoprotein reductase] + O2 = 32-oxoeburicol + oxidized [NADPH--hemoprotein reductase] + 2 H2O + H(+). It catalyses the reaction 32-oxoeburicol + reduced [NADPH--hemoprotein reductase] + O2 = 14-demethyleburicol + formate + oxidized [NADPH--hemoprotein reductase] + H2O + 2 H(+). It participates in steroid metabolism; ergosterol biosynthesis. In terms of biological role, together with cyp51A and cyp51C, encodes the sterol 14alpha-demethylase that plays a critical role in the third module of ergosterol biosynthesis pathway, being ergosterol the major sterol component in fungal membranes that participates in a variety of functions. Essential for ascospore production. The third module or late pathway involves the ergosterol synthesis itself through consecutive reactions that mainly occur in the endoplasmic reticulum (ER) membrane. In filamentous fungi, during the initial step of this module, lanosterol (lanosta-8,24-dien-3beta-ol) can be metabolized to eburicol. Sterol 14alpha-demethylase catalyzes the three-step oxidative removal of the 14alpha-methyl group (C-32) of both these sterols in the form of formate, and converts eburicol and lanosterol to 14-demethyleburicol (4,4,24-trimethylergosta-8,14,24(28)-trienol) and 4,4-dimethyl-5alpha-cholesta-8,14,24-trien-3beta-ol, respectively, which are further metabolized by other enzymes in the pathway to ergosterol. Can also use substrates not intrinsic to fungi, such as 24,25-dihydrolanosterol (DHL), producing 4,4'-dimethyl-8,14-cholestadien-3-beta-ol, but at lower rates than the endogenous substrates. The polypeptide is Sterol 14-alpha demethylase CYP51A (Gibberella zeae (strain ATCC MYA-4620 / CBS 123657 / FGSC 9075 / NRRL 31084 / PH-1) (Wheat head blight fungus)).